The following is a 101-amino-acid chain: NAD(P)H-quinone oxidoreductase subunit 4L, chloroplastic (101 aa).

3 helical membrane passes run 2 to 22 (MTEH…YGLI), 32 to 52 (MCLE…SDLF), and 61 to 81 (IFSI…PAIV).

The protein belongs to the complex I subunit 4L family. In terms of assembly, NDH is composed of at least 16 different subunits, 5 of which are encoded in the nucleus.

The protein localises to the plastid. It localises to the chloroplast thylakoid membrane. The catalysed reaction is a plastoquinone + NADH + (n+1) H(+)(in) = a plastoquinol + NAD(+) + n H(+)(out). It carries out the reaction a plastoquinone + NADPH + (n+1) H(+)(in) = a plastoquinol + NADP(+) + n H(+)(out). Functionally, NDH shuttles electrons from NAD(P)H:plastoquinone, via FMN and iron-sulfur (Fe-S) centers, to quinones in the photosynthetic chain and possibly in a chloroplast respiratory chain. The immediate electron acceptor for the enzyme in this species is believed to be plastoquinone. Couples the redox reaction to proton translocation, and thus conserves the redox energy in a proton gradient. In Liriodendron tulipifera (Tuliptree), this protein is NAD(P)H-quinone oxidoreductase subunit 4L, chloroplastic.